A 359-amino-acid polypeptide reads, in one-letter code: MAKELTREMLWEAGAQFGHQTKRWNPKMKPYIYGEKNKIHIIDLQQTLWRLEDVKKLMANIAARKGKILFVGTKKQAKWIVKDAAERCESFYVNQRWLGGTLTNLKTIHLRVKRLWNIERQEKNGELKLLPKKEQMLIKKEKDKLEKFLGGIKGMKELPQALFVVDPKEEHIAVREARKLRIPVIAICDTNVDPVPIDYIIPANDDTSRSIAIITHHIADLYGDAMGIKMPEPQFKPSEFTRRDGDENRNSRGGQYDNRRMSGRNERGRDTHYSHKAPNSGKEEAPVGTEPVATTSAPSFNFNTINVVDNDLEKTLSKLKVDELEILSEGFALPKAKKAEMVSELSKHLTIVDNKIVKK.

The interval 232 to 295 (EPQFKPSEFT…PVGTEPVATT (64 aa)) is disordered. Composition is skewed to basic and acidic residues over residues 239 to 250 (EFTRRDGDENRN) and 257 to 273 (DNRRMSGRNERGRDTHY).

Belongs to the universal ribosomal protein uS2 family.

This Spiroplasma citri protein is Small ribosomal subunit protein uS2 (rpsB).